A 152-amino-acid polypeptide reads, in one-letter code: Putative membrane protein insertion efficiency factor (152 aa).

The disordered stretch occupies residues 81–152 (AAGGYDPVPG…IVGSGRGPWV (72 aa)).

The protein belongs to the UPF0161 family.

Its subcellular location is the cell membrane. Functionally, could be involved in insertion of integral membrane proteins into the membrane. The protein is Putative membrane protein insertion efficiency factor of Frankia casuarinae (strain DSM 45818 / CECT 9043 / HFP020203 / CcI3).